Consider the following 680-residue polypeptide: MIDRYKHQQLRIGLVSPQQISAWATKIIPNGEIVGEVTKPYTFHYKTNKPEKDGLFCERIFGPIKSGICACGNYRVIGDEKEDPKFCEQCGVEFVDSRIRRYQMGYIKLTCPVTHVWYLKRLPSYIANLLDKPLKELEGLVYCDFSFARPITKKPTFLRLRGSFEYEIQSWKYSIPLFFTTQGFDIFRNREISTGAGAIREQLADLDLRIIIENSLVEWKQLGEEGPTGNEWEDRKIVRRKDFLVRRMELAKHFIRTNIEPEWMVLCLLPVLPPELRPIIQIEGGKLMSSDINELYRRVIYRNNTLTDLLTTSRSTPGELVMCQEKLVQEAVDTLLDNGIRGQPMRDGHNKVYKSFSDVIEGKEGRFRETLLGKRVDYSGRSVIVVGPSLSLHRCGLPREIAIELFQTFVIRGLIRQHLASNIGVAKSQIREKKPIVWEILQEVMQGHPVLLNRAPTLHRLGIQSFQPILVEGRTICLHPLVCKGFNADFDGDQMAVHVPLSLEAQAEARLLMFSHMNLLSPAIGDPISVPTQDMLIGLYVLTSGTRRGICANRYNPCNRKNYQNERIYETNYKYTKEPFFCNSYDAIGAYRQKKINLDSPLWLRWQLDQRVIASREVPIEVHYESFGNYHEIYAHYLIVRSVKKENFCIYIRTTVGHISFYREIEEAIQGFSQACSYDT.

Positions 69, 71, 87, and 90 each coordinate Zn(2+). Mg(2+) contacts are provided by Asp-489, Asp-491, and Asp-493.

It belongs to the RNA polymerase beta' chain family. RpoC1 subfamily. In plastids the minimal PEP RNA polymerase catalytic core is composed of four subunits: alpha, beta, beta', and beta''. When a (nuclear-encoded) sigma factor is associated with the core the holoenzyme is formed, which can initiate transcription. It depends on Mg(2+) as a cofactor. Zn(2+) is required as a cofactor.

The protein localises to the plastid. It localises to the chloroplast. It catalyses the reaction RNA(n) + a ribonucleoside 5'-triphosphate = RNA(n+1) + diphosphate. Its function is as follows. DNA-dependent RNA polymerase catalyzes the transcription of DNA into RNA using the four ribonucleoside triphosphates as substrates. This chain is DNA-directed RNA polymerase subunit beta', found in Arabidopsis thaliana (Mouse-ear cress).